A 362-amino-acid polypeptide reads, in one-letter code: Protein-glutamate methylesterase/protein-glutamine glutaminase 5 (362 aa).

Residues 13–130 (RVLVVDDSAL…RRFLEESRVR (118 aa)) enclose the Response regulatory domain. 4-aspartylphosphate is present on D64. In terms of domain architecture, CheB-type methylesterase spans 172–362 (LQTTERVVVV…IPPELLRLCR (191 aa)). Catalysis depends on residues S184, H210, and D306.

Belongs to the CheB family. Post-translationally, phosphorylated by CheA. Phosphorylation of the N-terminal regulatory domain activates the methylesterase activity.

Its subcellular location is the cytoplasm. The enzyme catalyses [protein]-L-glutamate 5-O-methyl ester + H2O = L-glutamyl-[protein] + methanol + H(+). It catalyses the reaction L-glutaminyl-[protein] + H2O = L-glutamyl-[protein] + NH4(+). Involved in chemotaxis. Part of a chemotaxis signal transduction system that modulates chemotaxis in response to various stimuli. Catalyzes the demethylation of specific methylglutamate residues introduced into the chemoreceptors (methyl-accepting chemotaxis proteins or MCP) by CheR. Also mediates the irreversible deamidation of specific glutamine residues to glutamic acid. The chain is Protein-glutamate methylesterase/protein-glutamine glutaminase 5 from Anaeromyxobacter dehalogenans (strain 2CP-C).